The primary structure comprises 442 residues: Exodeoxyribonuclease 7 large subunit (442 aa).

Belongs to the XseA family. Heterooligomer composed of large and small subunits.

The protein localises to the cytoplasm. The enzyme catalyses Exonucleolytic cleavage in either 5'- to 3'- or 3'- to 5'-direction to yield nucleoside 5'-phosphates.. Functionally, bidirectionally degrades single-stranded DNA into large acid-insoluble oligonucleotides, which are then degraded further into small acid-soluble oligonucleotides. This chain is Exodeoxyribonuclease 7 large subunit, found in Rickettsia bellii (strain OSU 85-389).